A 58-amino-acid polypeptide reads, in one-letter code: Large ribosomal subunit protein bL32 (58 aa).

Belongs to the bacterial ribosomal protein bL32 family.

The sequence is that of Large ribosomal subunit protein bL32 from Prochlorococcus marinus (strain MIT 9515).